A 333-amino-acid polypeptide reads, in one-letter code: Adenosine deaminase (333 aa).

Residues histidine 12 and histidine 14 each contribute to the Zn(2+) site. Substrate is bound by residues histidine 14, aspartate 16, and glycine 170. Histidine 197 serves as a coordination point for Zn(2+). The Proton donor role is filled by glutamate 200. Aspartate 278 is a Zn(2+) binding site. Aspartate 279 contributes to the substrate binding site.

It belongs to the metallo-dependent hydrolases superfamily. Adenosine and AMP deaminases family. Adenosine deaminase subfamily. It depends on Zn(2+) as a cofactor.

The catalysed reaction is adenosine + H2O + H(+) = inosine + NH4(+). It carries out the reaction 2'-deoxyadenosine + H2O + H(+) = 2'-deoxyinosine + NH4(+). Functionally, catalyzes the hydrolytic deamination of adenosine and 2-deoxyadenosine. The polypeptide is Adenosine deaminase (Pseudoalteromonas translucida (strain TAC 125)).